The primary structure comprises 145 residues: Nucleoside diphosphate kinase (145 aa).

Positions 11, 59, 87, 93, 104, and 114 each coordinate ATP. Catalysis depends on histidine 117, which acts as the Pros-phosphohistidine intermediate.

It belongs to the NDK family. Mg(2+) is required as a cofactor.

It localises to the cytoplasm. The enzyme catalyses a 2'-deoxyribonucleoside 5'-diphosphate + ATP = a 2'-deoxyribonucleoside 5'-triphosphate + ADP. The catalysed reaction is a ribonucleoside 5'-diphosphate + ATP = a ribonucleoside 5'-triphosphate + ADP. Major role in the synthesis of nucleoside triphosphates other than ATP. The ATP gamma phosphate is transferred to the NDP beta phosphate via a ping-pong mechanism, using a phosphorylated active-site intermediate. In Sulfolobus acidocaldarius (strain ATCC 33909 / DSM 639 / JCM 8929 / NBRC 15157 / NCIMB 11770), this protein is Nucleoside diphosphate kinase.